Reading from the N-terminus, the 262-residue chain is Probable carboxylesterase Culp3 (262 aa).

The first 41 residues, 1-41 (MNNRPIRLLTSGRAGLGAGALITAVVLLIALGAVWTLVAFA), serve as a signal peptide directing secretion. A disulfide bond links C44 and C114. S125 serves as the catalytic Nucleophile. A disulfide bridge links C188 with C195. D192 is an active-site residue. H206 (proton donor/acceptor) is an active-site residue. Residues 241–262 (LPGSVLQMPGTAAPAPESLHGR) form a disordered region.

The protein belongs to the cutinase family.

The protein localises to the secreted. The polypeptide is Probable carboxylesterase Culp3 (cut3) (Mycobacterium tuberculosis (strain CDC 1551 / Oshkosh)).